The primary structure comprises 302 residues: Glycine--tRNA ligase alpha subunit (302 aa).

The protein belongs to the class-II aminoacyl-tRNA synthetase family. Tetramer of two alpha and two beta subunits.

The protein resides in the cytoplasm. It catalyses the reaction tRNA(Gly) + glycine + ATP = glycyl-tRNA(Gly) + AMP + diphosphate. The sequence is that of Glycine--tRNA ligase alpha subunit from Edwardsiella ictaluri (strain 93-146).